A 577-amino-acid polypeptide reads, in one-letter code: Calcium-dependent protein kinase 22 (577 aa).

G2 carries the N-myristoyl glycine lipid modification. One can recognise a Protein kinase domain in the interval 105–368 (YRLGAELGRG…AKEVLEHPWL (264 aa)). ATP-binding positions include 111-119 (LGRGEFGVT) and K134. The Proton acceptor role is filled by D234. Residues 374–404 (APNVSLGEIVRSRLMQFSAMNKFKKKALGVV) are autoinhibitory domain. EF-hand domains follow at residues 411–446 (EEMD…NGHP), 447–482 (VPET…IKKM), 483–518 (SNEE…ELGP), and 520–553 (EQVV…GSDW). D424, D426, S428, N430, D435, D460, D462, N464, T466, E471, D496, D498, N500, E507, D531, D533, D535, R537, and E542 together coordinate Ca(2+).

The protein belongs to the protein kinase superfamily. Ser/Thr protein kinase family. CDPK subfamily.

The protein localises to the membrane. The catalysed reaction is L-seryl-[protein] + ATP = O-phospho-L-seryl-[protein] + ADP + H(+). It carries out the reaction L-threonyl-[protein] + ATP = O-phospho-L-threonyl-[protein] + ADP + H(+). Activated by calcium. Autophosphorylation may play an important role in the regulation of the kinase activity. In terms of biological role, may play a role in signal transduction pathways that involve calcium as a second messenger. This Oryza sativa subsp. japonica (Rice) protein is Calcium-dependent protein kinase 22.